The chain runs to 416 residues: UDP-N-acetylglucosamine 1-carboxyvinyltransferase (416 aa).

22–23 contributes to the phosphoenolpyruvate binding site; that stretch reads KN. A UDP-N-acetyl-alpha-D-glucosamine-binding site is contributed by arginine 92. Catalysis depends on cysteine 116, which acts as the Proton donor. Cysteine 116 is modified (2-(S-cysteinyl)pyruvic acid O-phosphothioketal). UDP-N-acetyl-alpha-D-glucosamine-binding positions include 121–125, aspartate 304, and isoleucine 326; that span reads RPVDQ.

This sequence belongs to the EPSP synthase family. MurA subfamily.

The protein localises to the cytoplasm. The enzyme catalyses phosphoenolpyruvate + UDP-N-acetyl-alpha-D-glucosamine = UDP-N-acetyl-3-O-(1-carboxyvinyl)-alpha-D-glucosamine + phosphate. It functions in the pathway cell wall biogenesis; peptidoglycan biosynthesis. Functionally, cell wall formation. Adds enolpyruvyl to UDP-N-acetylglucosamine. The protein is UDP-N-acetylglucosamine 1-carboxyvinyltransferase of Cupriavidus necator (strain ATCC 17699 / DSM 428 / KCTC 22496 / NCIMB 10442 / H16 / Stanier 337) (Ralstonia eutropha).